Consider the following 324-residue polypeptide: Glycerol-3-phosphate dehydrogenase [NAD(P)+] (324 aa).

NADPH contacts are provided by serine 10, phenylalanine 11, arginine 31, and lysine 106. Residues lysine 106, glycine 134, and serine 136 each contribute to the sn-glycerol 3-phosphate site. Alanine 138 contacts NADPH. The sn-glycerol 3-phosphate site is built by lysine 189, aspartate 244, serine 254, arginine 255, and asparagine 256. The active-site Proton acceptor is lysine 189. Arginine 255 contributes to the NADPH binding site. NADPH contacts are provided by isoleucine 279 and glutamate 281.

Belongs to the NAD-dependent glycerol-3-phosphate dehydrogenase family.

It is found in the cytoplasm. It carries out the reaction sn-glycerol 3-phosphate + NAD(+) = dihydroxyacetone phosphate + NADH + H(+). It catalyses the reaction sn-glycerol 3-phosphate + NADP(+) = dihydroxyacetone phosphate + NADPH + H(+). Its pathway is membrane lipid metabolism; glycerophospholipid metabolism. Its function is as follows. Catalyzes the reduction of the glycolytic intermediate dihydroxyacetone phosphate (DHAP) to sn-glycerol 3-phosphate (G3P), the key precursor for phospholipid synthesis. This chain is Glycerol-3-phosphate dehydrogenase [NAD(P)+], found in Ehrlichia canis (strain Jake).